The primary structure comprises 685 residues: DNA ligase (685 aa).

Residues 47–51 (DSEYD), 96–97 (SL), and Glu-125 each bind NAD(+). Lys-127 functions as the N6-AMP-lysine intermediate in the catalytic mechanism. 4 residues coordinate NAD(+): Arg-148, Glu-185, Lys-304, and Lys-328. Positions 422, 425, 440, and 446 each coordinate Zn(2+). The BRCT domain maps to 605 to 685 (AEAQPLKGQT…ELLALLAANA (81 aa)).

The protein belongs to the NAD-dependent DNA ligase family. LigA subfamily. Requires Mg(2+) as cofactor. The cofactor is Mn(2+).

It carries out the reaction NAD(+) + (deoxyribonucleotide)n-3'-hydroxyl + 5'-phospho-(deoxyribonucleotide)m = (deoxyribonucleotide)n+m + AMP + beta-nicotinamide D-nucleotide.. In terms of biological role, DNA ligase that catalyzes the formation of phosphodiester linkages between 5'-phosphoryl and 3'-hydroxyl groups in double-stranded DNA using NAD as a coenzyme and as the energy source for the reaction. It is essential for DNA replication and repair of damaged DNA. The sequence is that of DNA ligase from Shewanella baltica (strain OS223).